Consider the following 147-residue polypeptide: Allograft inflammatory factor 1 (147 aa).

N-acetylserine is present on S2. At K11 the chain carries N6-acetyllysine. S39 carries the phosphoserine modification. The EF-hand 1 domain maps to 45-80; sequence SKLEAFKTKYMEFDLNGNGDIDIMSLKRMLEKLGVP. Ca(2+) is bound by residues D58, N60, N62, D64, E98, T100, and D105. An EF-hand 2; degenerate domain is found at 81–115; that stretch reads KTHLELKKLIREVSSGSEETFSYSDFLRMMLGKRS. Positions 127–147 are disordered; it reads KNKEHQKPTGPPAKKAISELP.

In terms of assembly, homodimer (Potential). Monomer. Interacts with LCP1. Cardiac allograft, spleen and testis. Expressed by inflammatory cells (macrophages and neutrophils).

It localises to the cytoplasm. The protein localises to the cytoskeleton. The protein resides in the cell projection. It is found in the ruffle membrane. Its subcellular location is the phagocytic cup. Functionally, actin-binding protein that enhances membrane ruffling and RAC activation. Enhances the actin-bundling activity of LCP1. Binds calcium. Plays a role in RAC signaling and in phagocytosis. May play an role in macrophage activation and function. Promotes the proliferation of vascular smooth muscle cells and of T-lymphocytes. Enhances lymphocyte migration. Plays a role in vascular inflammation. The sequence is that of Allograft inflammatory factor 1 (Aif1) from Rattus norvegicus (Rat).